A 221-amino-acid polypeptide reads, in one-letter code: MDDESRLVAYQKAKYIKENMFGRTFHLHFHILENLANTFEKDDLTYVEIGTFEGGSLSLMMQNKKIKNLIGIDPLCIAGQEENLKKNTVKFNIHGSNVQHIKRYSYDEAIFPILDTLPNGIDILFIDGDHQYQPVINDFNLYYKYVNKGGYIVFDDYQDYRWSPQVMPAVNKIVADIQAGKYSPYKFEVIGCYPNNTGEVVSNIPVHGDMNNEFILKVVDK.

This is an uncharacterized protein from Acanthamoeba polyphaga (Amoeba).